A 302-amino-acid polypeptide reads, in one-letter code: Lipoyl synthase (302 aa).

[4Fe-4S] cluster-binding residues include C54, C59, C65, C80, C84, C87, and S291. The Radical SAM core domain maps to 66–280; sequence WSRKTATYML…RIYGKSIGFK (215 aa).

Belongs to the radical SAM superfamily. Lipoyl synthase family. [4Fe-4S] cluster is required as a cofactor.

It localises to the cytoplasm. It catalyses the reaction [[Fe-S] cluster scaffold protein carrying a second [4Fe-4S](2+) cluster] + N(6)-octanoyl-L-lysyl-[protein] + 2 oxidized [2Fe-2S]-[ferredoxin] + 2 S-adenosyl-L-methionine + 4 H(+) = [[Fe-S] cluster scaffold protein] + N(6)-[(R)-dihydrolipoyl]-L-lysyl-[protein] + 4 Fe(3+) + 2 hydrogen sulfide + 2 5'-deoxyadenosine + 2 L-methionine + 2 reduced [2Fe-2S]-[ferredoxin]. Its pathway is protein modification; protein lipoylation via endogenous pathway; protein N(6)-(lipoyl)lysine from octanoyl-[acyl-carrier-protein]: step 2/2. Its function is as follows. Catalyzes the radical-mediated insertion of two sulfur atoms into the C-6 and C-8 positions of the octanoyl moiety bound to the lipoyl domains of lipoate-dependent enzymes, thereby converting the octanoylated domains into lipoylated derivatives. This is Lipoyl synthase from Leptospira borgpetersenii serovar Hardjo-bovis (strain JB197).